The following is a 459-amino-acid chain: Transcriptional coactivator YAP1 (459 aa).

Residues Ser-21, Ser-69, Ser-87, and Ser-119 each carry the phosphoserine; by LATS1 and LATS2 modification. Disordered regions lie at residues Leu-51–Ser-88 and Ser-103–Pro-129. 2 WW domains span residues Val-126–Lys-159 and Gly-186–Leu-219. 2 disordered regions span residues Thr-231 to Asn-254 and Pro-307 to Ser-364. Residues His-247–Leu-459 form a transactivation domain region. Polar residues-rich tracts occupy residues Pro-307–Tyr-347 and Asp-355–Ser-364.

The protein belongs to the YAP1 family. In terms of processing, phosphorylated by lats1 and lats2; leading to cytoplasmic translocation and inactivation. In terms of tissue distribution, ubiquitously expressed throughout development.

It localises to the cytoplasm. The protein resides in the nucleus. Its subcellular location is the cell junction. It is found in the tight junction. The protein localises to the cell membrane. Its function is as follows. Transcriptional regulator which can act both as a coactivator and a corepressor and is the critical downstream regulatory target in the Hippo signaling pathway that plays a pivotal role in organ size control and tumor suppression by restricting proliferation and promoting apoptosis. Plays a key role in tissue tension and 3D tissue shape by regulating cortical actomyosin network formation. This Oryzias latipes (Japanese rice fish) protein is Transcriptional coactivator YAP1.